The following is a 504-amino-acid chain: Protein FMP42 (504 aa).

At 1-11 the chain is on the vacuolar side; that stretch reads MTSTRTLRYAQ. The chain crosses the membrane as a helical span at residues 12–32; that stretch reads VACACIWCLFSAGIIFGFAAL. The Cytoplasmic portion of the chain corresponds to 33–64; the sequence is KPILISEGVYHELCDPKDGDRLLCTAQDLKLN. Residues 65–85 traverse the membrane as a helical segment; sequence FIFALSATVTNIMALPVGKIL. At 86 to 91 the chain is on the vacuolar side; the sequence is DMYGPR. The helical transmembrane segment at 92–112 threads the bilayer; that stretch reads VCGIIGSCLLFLASGNFISAK. The Cytoplasmic portion of the chain corresponds to 113–119; sequence HLVSLWD. A helical transmembrane segment spans residues 120–140; that stretch reads PYLVGYTLLAVAGPFVFISCF. Residues 141 to 150 are Vacuolar-facing; it reads QLANSFPQRS. A helical transmembrane segment spans residues 151–171; that stretch reads GTVLALLTGSFDSSSALFLLY. At 172 to 186 the chain is on the cytoplasmic side; sequence RLLYQNWFPTLNVSR. The chain crosses the membrane as a helical span at residues 187–207; sequence FFTLYLIVPVFILACQLTIMP. Over 208 to 302 the chain is Vacuolar; it reads HSSYKTVNHI…KSAYEQIKSP (95 aa). A phosphoserine mark is found at Ser238, Ser249, and Ser269. A helical transmembrane segment spans residues 303–323; the sequence is WFYLMLLFALVAMLRINYFIA. Residues 324 to 344 lie on the Cytoplasmic side of the membrane; sequence TVRTQEEYLLNDPDLALKLNS. A helical transmembrane segment spans residues 345 to 365; that stretch reads IFDMLLPLGGAVSIPFIGLLL. Residues 366-385 are Vacuolar-facing; sequence DHTDTLSTLTILFTTSTAIG. Residues 386 to 406 form a helical membrane-spanning segment; that stretch reads VFGLIPNSFTWNLIGIVLLVV. Residues 407-421 lie on the Cytoplasmic side of the membrane; it reads YRPFYYTVVSDYSSK. A helical membrane pass occupies residues 422 to 442; sequence VFGFDTFGTVYGLLSCICGIF. Over 443–462 the chain is Vacuolar; it reads NMSQNLLDKWTHTTFNMNPF. The helical transmembrane segment at 463-483 threads the bilayer; the sequence is PINLTLVILTVVFSLTLTFYI. At 484 to 504 the chain is on the cytoplasmic side; sequence RSQILPKPVNERGLSSNYQTI.

The protein belongs to the SLC43A transporter (TC 2.A.1.44) family.

The protein resides in the vacuole membrane. In Saccharomyces cerevisiae (strain ATCC 204508 / S288c) (Baker's yeast), this protein is Protein FMP42 (FMP42).